The sequence spans 515 residues: Probable multifunctional siroheme biosynthesis protein HemA (515 aa).

Residues 26–27 and 47–48 each bind NAD(+); these read SL and IR. The tract at residues 26-174 is glutamyl-tRNA reductase; sequence SLDYKSAAID…TAAKKAKTEI (149 aa). L-glutamyl-tRNA(Glu) contacts are provided by residues 68-71, Ser127, Glu132, and Gln138; that span reads TCNR. Catalysis depends on Cys69, which acts as the Nucleophile. 206-211 is an NADP(+) binding site; it reads GNGEIG. Positions 367–507 are precorrin-2 dehydrogenase /sirohydrochlorin ferrochelatase; the sequence is FPLFIDLSGK…SLVKSVAEQI (141 aa).

In the N-terminal section; belongs to the glutamyl-tRNA reductase family. It in the C-terminal section; belongs to the precorrin-2 dehydrogenase / sirohydrochlorin ferrochelatase family. Homodimer.

It carries out the reaction (S)-4-amino-5-oxopentanoate + tRNA(Glu) + NADP(+) = L-glutamyl-tRNA(Glu) + NADPH + H(+). It catalyses the reaction precorrin-2 + NAD(+) = sirohydrochlorin + NADH + 2 H(+). The enzyme catalyses siroheme + 2 H(+) = sirohydrochlorin + Fe(2+). It participates in cofactor biosynthesis; adenosylcobalamin biosynthesis; sirohydrochlorin from precorrin-2: step 1/1. Its pathway is porphyrin-containing compound metabolism; siroheme biosynthesis; siroheme from sirohydrochlorin: step 1/1. It functions in the pathway porphyrin-containing compound metabolism; siroheme biosynthesis; sirohydrochlorin from precorrin-2: step 1/1. The protein operates within porphyrin-containing compound metabolism; protoporphyrin-IX biosynthesis; 5-aminolevulinate from L-glutamyl-tRNA(Glu): step 1/2. In terms of biological role, multifunctional enzyme that catalyzes the NADPH-dependent reduction of glutamyl-tRNA(Glu) to glutamate 1-semialdehyde (GSA), the NAD-dependent ring dehydrogenation of precorrin-2 to sirohydrochlorin and finally, the ferrochelation of sirohydrochlorin to yield siroheme. This Ruminiclostridium josui (Clostridium josui) protein is Probable multifunctional siroheme biosynthesis protein HemA.